The primary structure comprises 69 residues: uncharacterized protein (69 aa).

The HTH cro/C1-type domain maps to isoleucine 10 to leucine 64. Positions glutamine 21–arginine 40 form a DNA-binding region, H-T-H motif.

This is an uncharacterized protein from Bacillus subtilis (strain 168).